The chain runs to 857 residues: Blue light receptor lreA (857 aa).

PAS domains follow at residues 306–328 (IIYV…VGQN), 479–542 (LVEN…TTTD), and 608–642 (LSKS…DLMD). A GATA-type zinc finger spans residues 811-836 (CAICQTKKTPEWRRGPSGERDLCNSC).

Functionally, transcription factor that acts as a blue light sensor. Plays crucial roles in fungal growth and asexual development. Involved in conidiophore formation, sclerotium production, and conidial stress tolerance. Promotes conidiation by inducing the expression of brlA and abaA. Positively regulates the fungal pathogenicity towards maize. In blue light conditions, inhibits aflatoxin B1 (AFB1) biosynthesis by down-regulating the expression of key genes such as aflA, aflJ, aflH, aflO and aflK. The sequence is that of Blue light receptor lreA from Aspergillus flavus.